A 415-amino-acid polypeptide reads, in one-letter code: 3-oxoacyl-[acyl-carrier-protein] synthase 2 (415 aa).

The Ketosynthase family 3 (KS3) domain maps to K3–K412. Catalysis depends on for beta-ketoacyl synthase activity residues C164, H304, and H342.

Belongs to the thiolase-like superfamily. Beta-ketoacyl-ACP synthases family. In terms of assembly, homodimer.

It catalyses the reaction a fatty acyl-[ACP] + malonyl-[ACP] + H(+) = a 3-oxoacyl-[ACP] + holo-[ACP] + CO2. It carries out the reaction (9Z)-hexadecenoyl-[ACP] + malonyl-[ACP] + H(+) = 3-oxo-(11Z)-octadecenoyl-[ACP] + holo-[ACP] + CO2. It participates in lipid metabolism; fatty acid biosynthesis. Its function is as follows. Involved in the type II fatty acid elongation cycle. Catalyzes the elongation of a wide range of acyl-ACP by the addition of two carbons from malonyl-ACP to an acyl acceptor. Can efficiently catalyze the conversion of palmitoleoyl-ACP (cis-hexadec-9-enoyl-ACP) to cis-vaccenoyl-ACP (cis-octadec-11-enoyl-ACP), an essential step in the thermal regulation of fatty acid composition. The sequence is that of 3-oxoacyl-[acyl-carrier-protein] synthase 2 (fabF) from Vibrio harveyi (Beneckea harveyi).